The following is a 418-amino-acid chain: Neurotensin receptor type 1 (418 aa).

Topologically, residues 1–67 are extracellular; it reads MRLNSSAPGT…TDIYSKVLVT (67 aa). 3 N-linked (GlcNAc...) asparagine glycosylation sites follow: N4, N37, and N41. The helical transmembrane segment at 68 to 88 threads the bilayer; that stretch reads AVYLALFVVGTVGNTVTAFTL. At 89–102 the chain is on the cytoplasmic side; the sequence is ARKKSLQSLQSTVH. A helical transmembrane segment spans residues 103 to 122; sequence YHLGSLALSDLLTLLLAMPV. The Extracellular portion of the chain corresponds to 123–142; the sequence is ELYNFIWVHHPWAFGDAGCR. An intrachain disulfide couples C141 to C224. Residues 143-164 traverse the membrane as a helical segment; it reads GYYFLRDACTYATALNVASLSV. At 165 to 184 the chain is on the cytoplasmic side; it reads ERYLAICHPFKAKTLMSRSR. The chain crosses the membrane as a helical span at residues 185 to 205; sequence TKKFISAIWLASALLAVPMLF. The Extracellular portion of the chain corresponds to 206-234; that stretch reads TMGEQNRSADGQHAGGLVCTPTIHTATVK. A helical transmembrane segment spans residues 235-259; it reads VVIQVNTFMSFIFPMVVISVLNTII. Topologically, residues 260 to 303 are cytoplasmic; it reads ANKLTVMVRQAAEQGQVCTVGGEHSTFSMAIEPGRVQALRHGVR. The helical transmembrane segment at 304–325 threads the bilayer; it reads VLRAVVIAFVVCWLPYHVRRLM. Residues 321 to 344 are neurotensin binding; sequence VRRLMFCYISDEQWTPFLYDFYHY. Topologically, residues 326–343 are extracellular; sequence FCYISDEQWTPFLYDFYH. The chain crosses the membrane as a helical span at residues 344–364; it reads YFYMVTNALFYVSSTINPILY. Residues 365–418 are Cytoplasmic-facing; the sequence is NLVSANFRHIFLATLACLCPVWRRRRKRPAFSRKADSVSSNHTLSSNATRETLY. Residues C381 and C383 are each lipidated (S-palmitoyl cysteine).

It belongs to the G-protein coupled receptor 1 family. Neurotensin receptor subfamily. NTSR1 sub-subfamily. As to quaternary structure, interacts (palmitoylated form) with GNA11. Post-translationally, N-glycosylated. In terms of processing, palmitoylated; this is required for normal localization at membrane rafts and normal GNA11-mediated activation of down-stream signaling cascades. The palmitoylation level increases in response to neurotensin treatment. As to expression, expressed in prostate (at protein level). Detected in colon and peripheral blood mononuclear cells. Detected at very low levels in brain.

The protein resides in the cell membrane. The protein localises to the membrane raft. Its function is as follows. G-protein coupled receptor for the tridecapeptide neurotensin (NTS). Signaling is effected via G proteins that activate a phosphatidylinositol-calcium second messenger system. Signaling leads to the activation of downstream MAP kinases and protects cells against apoptosis. This Homo sapiens (Human) protein is Neurotensin receptor type 1 (NTSR1).